The primary structure comprises 291 residues: G1/S-specific cyclin-D2 (291 aa).

The segment at 264–291 (QQQQSNPSKTIEELDQASTPTDVRDINL) is disordered. A Phosphothreonine modification is found at T282.

The protein belongs to the cyclin family. Cyclin D subfamily. As to quaternary structure, interacts with the CDK4 and CDK6 protein kinases to form a serine/threonine kinase holoenzyme complex. The cyclin subunit imparts substrate specificity to the complex. Phosphorylation at Thr-282 by MAP kinases is required for ubiquitination and degradation by the DCX(AMBRA1) complex. In terms of processing, ubiquitinated by the DCX(AMBRA1) complex during the transition from G1 to S cell phase, leading to its degradation: ubiquitination is dependent on Thr-282 phosphorylation. The DCX(AMBRA1) complex represents the major regulator of CCND2 stability during the G1/S transition.

The protein resides in the nucleus. It localises to the cytoplasm. The protein localises to the nucleus membrane. Functionally, regulatory component of the cyclin D2-CDK4 (DC) complex that phosphorylates and inhibits members of the retinoblastoma (RB) protein family including RB1 and regulates the cell-cycle during G(1)/S transition. Phosphorylation of RB1 allows dissociation of the transcription factor E2F from the RB/E2F complex and the subsequent transcription of E2F target genes which are responsible for the progression through the G(1) phase. Hypophosphorylates RB1 in early G(1) phase. Cyclin D-CDK4 complexes are major integrators of various mitogenenic and antimitogenic signals. This is G1/S-specific cyclin-D2 (CCND2) from Gallus gallus (Chicken).